The sequence spans 267 residues: Phosphonates import ATP-binding protein PhnC 1 (267 aa).

Residues 3–247 enclose the ABC transporter domain; the sequence is LSLDGVDLVH…ALDALYANEQ (245 aa). An ATP-binding site is contributed by 36-43; sequence GPSGAGKT.

This sequence belongs to the ABC transporter superfamily. Phosphonates importer (TC 3.A.1.9.1) family. As to quaternary structure, the complex is composed of two ATP-binding proteins (PhnC), two transmembrane proteins (PhnE) and a solute-binding protein (PhnD).

The protein localises to the cell inner membrane. The enzyme catalyses phosphonate(out) + ATP + H2O = phosphonate(in) + ADP + phosphate + H(+). Its function is as follows. Part of the ABC transporter complex PhnCDE involved in phosphonates import. Responsible for energy coupling to the transport system. The sequence is that of Phosphonates import ATP-binding protein PhnC 1 from Pseudomonas aeruginosa (strain ATCC 15692 / DSM 22644 / CIP 104116 / JCM 14847 / LMG 12228 / 1C / PRS 101 / PAO1).